A 351-amino-acid chain; its full sequence is Maleylacetate reductase (351 aa).

Belongs to the iron-containing alcohol dehydrogenase family. In terms of assembly, homodimer.

The enzyme catalyses 3-oxoadipate + NAD(+) = maleylacetate + NADH + H(+). It participates in aromatic compound metabolism. Involved in the gamma-resorcylate (2,6-dihydroxybenzoate) catabolism. Catalyzes the reduction of maleylacetate to 3-oxoadipate. The polypeptide is Maleylacetate reductase (Rhizobium sp. (strain MTP-10005)).